The following is a 674-amino-acid chain: Protein phosphatase 1 regulatory subunit 15A (674 aa).

At 1-21 (MAPGQAPHQATPWRDAHPFFL) the chain is on the cytoplasmic side. Positions 1–60 (MAPGQAPHQATPWRDAHPFFLLSPVMGLLSRAWSRLRGLGPLEPWLVEAVKGAALVEAGL) are required for localization in the endoplasmic reticulum. Positions 22–39 (LSPVMGLLSRAWSRLRGL) form an intramembrane region, helical. The Cytoplasmic portion of the chain corresponds to 40–674 (GPLEPWLVEA…AALDLSGRRG (635 aa)). The segment at 65–504 (RTPLAIPHTP…AAEDWGEAEP (440 aa)) is disordered. Serine 143 carries the post-translational modification Phosphoserine. Acidic residues predominate over residues 162 to 172 (KAEEEGVAEEE). Polar residues predominate over residues 206 to 221 (TSTSALSPGSKPSTWV). Over residues 232–241 (TEDKRTERSK) the composition is skewed to basic and acidic residues. Residues 246–256 (TSVSPRSSGSD) are compositionally biased toward polar residues. Residues 258–281 (RSWEYRSGEASEEKEEKAHKETGK) are compositionally biased toward basic and acidic residues. Tyrosine 262 carries the post-translational modification Phosphotyrosine. Over residues 282 to 298 (GEAAPGPQSSAPAQRPQ) the composition is skewed to low complexity. 4 repeat units span residues 337 to 369 (AFLK…SDEE), 384 to 417 (VFLK…REAE), 427 to 460 (AFLK…SEAA), and 477 to 510 (AHFR…FRVA). Residues 337–510 (AFLKAWVYWP…EAEPCPFRVA (174 aa)) are 4 X 34 AA approximate repeats. The tract at residues 337–510 (AFLKAWVYWP…EAEPCPFRVA (174 aa)) is interaction with SMAD7. Acidic residues predominate over residues 348–373 (EDTEEEEDEEEDEDSDSGSDEEEGEA). Tyrosine 391 is modified (phosphotyrosine). Residues 395-415 (EDTEEEEDEDSDTGSAEDERE) are compositionally biased toward acidic residues. A compositionally biased stretch (low complexity) spans 418–427 (TSASTPPASA). The residue at position 434 (tyrosine 434) is a Phosphotyrosine. Residues 439–458 (DTEEEEDEDVDSEDKEDDSE) are compositionally biased toward acidic residues. Positions 466–477 (SDPHPSHPDQRA) are enriched in basic and acidic residues. The segment at 483–555 (GYRPGKETEE…DPETPLKARK (73 aa)) is interaction with KMT2A/MLL1. A compositionally biased stretch (acidic residues) spans 490-501 (TEEEEAAEDWGE). A Phosphotyrosine modification is found at tyrosine 512. Disordered regions lie at residues 534-554 (RLKR…LKAR) and 625-674 (APIP…GRRG). Residues 536–583 (KRPETPTHDPDPETPLKARKVRFSEKVTVHFLAVWAGPAQAARQGPWE) are interaction with SMARCB1. The segment covering 537-554 (RPETPTHDPDPETPLKAR) has biased composition (basic and acidic residues). Low complexity predominate over residues 630 to 666 (LTQTLPSSSVPSSPVQTTPLSQAVATPSRSSAAAAAA).

Belongs to the PPP1R15 family. As to quaternary structure, interacts with PPP1CA. Interacts with EIF2S1. Interacts with PCNA. Interacts with LYN and KMT2A/MLL1. Interacts with PPP1R1A and SMARCB1. Interacts with SMAD7. Interacts with BAG1. Interacts with NOX4. (Microbial infection) Interacts with enterovirus 71/EV71 non-structural protein precursor 3CD; this interaction promotes EV71 replication. Phosphorylated at multiple Ser/Thr residues. Phosphorylated on tyrosine by LYN; which impairs its antiproliferative activity. Phosphorylation at Tyr-262 enhances proteasomal degradation, this position is dephosphorylated by PTPN2. Post-translationally, polyubiquitinated. Exhibits a rapid proteasomal degradation with a half-life under 1 hour, ubiquitination depends on endoplasmic reticulum association.

Its subcellular location is the endoplasmic reticulum membrane. It localises to the mitochondrion outer membrane. In terms of biological role, recruits the serine/threonine-protein phosphatase PPP1CA to prevents excessive phosphorylation of the translation initiation factor eIF-2A/EIF2S1, thereby reversing the shut-off of protein synthesis initiated by stress-inducible kinases and facilitating recovery of cells from stress. Down-regulates the TGF-beta signaling pathway by promoting dephosphorylation of TGFB1 by PP1. May promote apoptosis by inducing p53/TP53 phosphorylation on 'Ser-15'. Plays an essential role in autophagy by tuning translation during starvation, thus enabling lysosomal biogenesis and a sustained autophagic flux. Also acts a viral restriction factor by attenuating HIV-1 replication. Mechanistically, mediates the inhibition of HIV-1 TAR RNA-mediated translation. (Microbial infection) Promotes enterovirus 71 replication by mediating the internal ribosome entry site (IRES) activity of viral 5'-UTR. In Homo sapiens (Human), this protein is Protein phosphatase 1 regulatory subunit 15A (PPP1R15A).